A 291-amino-acid chain; its full sequence is Ribosomal RNA small subunit methyltransferase H (291 aa).

Residues 31-33 (GGH), aspartate 50, phenylalanine 77, aspartate 98, and glutamine 105 each bind S-adenosyl-L-methionine.

Belongs to the methyltransferase superfamily. RsmH family.

The protein localises to the cytoplasm. The catalysed reaction is cytidine(1402) in 16S rRNA + S-adenosyl-L-methionine = N(4)-methylcytidine(1402) in 16S rRNA + S-adenosyl-L-homocysteine + H(+). Its function is as follows. Specifically methylates the N4 position of cytidine in position 1402 (C1402) of 16S rRNA. The chain is Ribosomal RNA small subunit methyltransferase H from Endomicrobium trichonymphae.